Consider the following 606-residue polypeptide: NADH-ubiquinone oxidoreductase chain 5 (606 aa).

16 helical membrane passes run 1-21 (MNLFTSFTLLTLLILTTPIMM), 35-55 (YVKNIVFCAFITSLVPAMVYL), 87-107 (LMFMPVALFITWSIMEFSMWY), 114-134 (INQFFKYLLLFLITMLILVTA), 140-160 (LFIGWEGVGIMSFLLIGWWFG), 171-191 (AILYNRIGDIGLLASMAWFLS), 211-233 (FPLMGLVLAAAGKSAQFGLHPWL), 241-261 (TPVSALLHSSTMVVAGIFLLV), 272-292 (LIQTVTLCLGAITTLFTAICA), 301-320 (IIAFSTSSQLGLMMVTIGLN), 325-347 (AFLHICTHAFFKAMLFLCSGSII), 366-386 (LPFTTTALIIGCLALTGMPFL), 413-433 (LIATSLTAVYSTRIIFFALLG), 457-477 (LLVGSIFAGFILSNSIPPMTT), 482-502 (MPLHLKLTALAMTTLGFIIAF), and 582-602 (GLIKLYFLSFLITITLSMILF).

It belongs to the complex I subunit 5 family. As to quaternary structure, core subunit of respiratory chain NADH dehydrogenase (Complex I) which is composed of 45 different subunits.

The protein localises to the mitochondrion inner membrane. It carries out the reaction a ubiquinone + NADH + 5 H(+)(in) = a ubiquinol + NAD(+) + 4 H(+)(out). In terms of biological role, core subunit of the mitochondrial membrane respiratory chain NADH dehydrogenase (Complex I) which catalyzes electron transfer from NADH through the respiratory chain, using ubiquinone as an electron acceptor. Essential for the catalytic activity and assembly of complex I. In Balaenoptera physalus (Fin whale), this protein is NADH-ubiquinone oxidoreductase chain 5 (MT-ND5).